Here is a 431-residue protein sequence, read N- to C-terminus: NADH-quinone oxidoreductase subunit D 2 (431 aa).

Residues 1-37 (MSEAKGVGGIDPRATPGSAGAGERPPMGTLSPRAGEG) form a disordered region.

This sequence belongs to the complex I 49 kDa subunit family. NDH-1 is composed of 14 different subunits. Subunits NuoB, C, D, E, F, and G constitute the peripheral sector of the complex.

Its subcellular location is the cell inner membrane. It catalyses the reaction a quinone + NADH + 5 H(+)(in) = a quinol + NAD(+) + 4 H(+)(out). Its function is as follows. NDH-1 shuttles electrons from NADH, via FMN and iron-sulfur (Fe-S) centers, to quinones in the respiratory chain. The immediate electron acceptor for the enzyme in this species is believed to be ubiquinone. Couples the redox reaction to proton translocation (for every two electrons transferred, four hydrogen ions are translocated across the cytoplasmic membrane), and thus conserves the redox energy in a proton gradient. The polypeptide is NADH-quinone oxidoreductase subunit D 2 (Anaeromyxobacter sp. (strain K)).